We begin with the raw amino-acid sequence, 263 residues long: 3-methyl-2-oxobutanoate hydroxymethyltransferase (263 aa).

Residues Asp45 and Asp84 each contribute to the Mg(2+) site. 3-methyl-2-oxobutanoate contacts are provided by residues 45–46, Asp84, and Lys112; that span reads DS. Glu114 is a binding site for Mg(2+). Catalysis depends on Glu181, which acts as the Proton acceptor.

The protein belongs to the PanB family. In terms of assembly, homodecamer; pentamer of dimers. Mg(2+) serves as cofactor.

It is found in the cytoplasm. The catalysed reaction is 3-methyl-2-oxobutanoate + (6R)-5,10-methylene-5,6,7,8-tetrahydrofolate + H2O = 2-dehydropantoate + (6S)-5,6,7,8-tetrahydrofolate. Its pathway is cofactor biosynthesis; (R)-pantothenate biosynthesis; (R)-pantoate from 3-methyl-2-oxobutanoate: step 1/2. In terms of biological role, catalyzes the reversible reaction in which hydroxymethyl group from 5,10-methylenetetrahydrofolate is transferred onto alpha-ketoisovalerate to form ketopantoate. This Buchnera aphidicola subsp. Acyrthosiphon pisum (strain 5A) protein is 3-methyl-2-oxobutanoate hydroxymethyltransferase.